Reading from the N-terminus, the 388-residue chain is Zinc finger CCCH domain-containing protein 47 (388 aa).

2 disordered regions span residues 1 to 130 (MADP…MAPL) and 144 to 282 (PLHE…TPSA). 2 stretches are compositionally biased toward basic and acidic residues: residues 61–109 (AAND…KSEV) and 181–193 (PDNHDHDPRHLPR). Residues 260–274 (ASSSSSSSSAGQQGS) are compositionally biased toward low complexity. C3H1-type zinc fingers lie at residues 321–348 (HHKIALCSKWRKGRCHNGAACRYSHGEE) and 359–388 (GGGGRPCPELAAAKGWCRYGLNCKYCHGGV).

The sequence is that of Zinc finger CCCH domain-containing protein 47 from Oryza sativa subsp. japonica (Rice).